Reading from the N-terminus, the 172-residue chain is MAKHEMEDRGDGLVEKMISVNRVTKVVKGGRIMAFSALTVVGDGDGGIGMGKGRSKEVPVAVQKAMEQARHNMMKIKLYNGTVKHTVEGRHGATRVLIQPAKDGTGVKAGGPMRAIFDAMGIHNVSAKIHGSTNPYNVVRATLDGLSKINTPAQIAAKRGLSIEDILGVGHE.

An S5 DRBM domain is found at 13–76 (LVEKMISVNR…EQARHNMMKI (64 aa)).

The protein belongs to the universal ribosomal protein uS5 family. In terms of assembly, part of the 30S ribosomal subunit. Contacts proteins S4 and S8.

With S4 and S12 plays an important role in translational accuracy. Functionally, located at the back of the 30S subunit body where it stabilizes the conformation of the head with respect to the body. The chain is Small ribosomal subunit protein uS5 from Chromobacterium violaceum (strain ATCC 12472 / DSM 30191 / JCM 1249 / CCUG 213 / NBRC 12614 / NCIMB 9131 / NCTC 9757 / MK).